The chain runs to 281 residues: Orotidine 5'-phosphate decarboxylase (281 aa).

Catalysis depends on lysine 94, which acts as the Proton donor.

This sequence belongs to the OMP decarboxylase family. Type 2 subfamily.

It carries out the reaction orotidine 5'-phosphate + H(+) = UMP + CO2. Its pathway is pyrimidine metabolism; UMP biosynthesis via de novo pathway; UMP from orotate: step 2/2. The polypeptide is Orotidine 5'-phosphate decarboxylase (Thermomicrobium roseum (strain ATCC 27502 / DSM 5159 / P-2)).